The chain runs to 839 residues: Autophagy-related protein 9A (839 aa).

Ala-2 is subject to N-acetylalanine. Residues 2–61 lie on the Cytoplasmic side of the membrane; sequence AQFDTEYQRLEASYSDSPPGEEDLLVHVAEGSKSPWHHIENLDLFFSRVYNLHQKNGFTC. A Tyrosine-based sorting signal motif is present at residues 8-11; that stretch reads YQRL. Ser-14, Ser-16, and Ser-18 each carry phosphoserine. Residues 62 to 84 traverse the membrane as a helical segment; that stretch reads MLIGEIFELMQFLFVVAFTTFLV. Residues 85–128 lie on the Lumenal side of the membrane; that stretch reads SCVDYDILFANKMVNHSLHPTEPVKVTLPDAFLPAQVCSARIQE. An N-linked (GlcNAc...) asparagine glycan is attached at Asn-99. The chain crosses the membrane as a helical span at residues 129–154; sequence NGSLITILVIAGVFWIHRLIKFIYNI. Residues 155-290 lie on the Cytoplasmic side of the membrane; that stretch reads CCYWEIHSFY…ELAQRLSNRI (136 aa). The stretch at 291–301 is an intramembrane region; it reads LWIGIANFLLC. The Cytoplasmic portion of the chain corresponds to 302–319; sequence PLILIWQILYAFFSYAEV. The stretch at 320 to 328 is an intramembrane region; that stretch reads LKREPGALG. The Cytoplasmic portion of the chain corresponds to 329 to 371; it reads ARCWSLYGRCYLRHFNELEHELQSRLNRGYKPASKYMNCFLSP. Residues 372 to 397 traverse the membrane as a helical segment; it reads LLTLLAKNGAFFAGSILAVLIALTIY. Residues 398-406 lie on the Lumenal side of the membrane; it reads DEDVLAVEH. The chain crosses the membrane as a helical span at residues 407 to 424; it reads VLTTVTLLGVTVTVCRSF. The Cytoplasmic segment spans residues 425–470; the sequence is IPDQHMVFCPEQLLRVILAHIHYMPDHWQGNAHRSQTRDEFAQLFQ. Residues 471 to 480 lie within the membrane without spanning it; sequence YKAVFILEEL. Over 481 to 483 the chain is Cytoplasmic; the sequence is LSP. An intramembrane segment occupies 484–492; the sequence is IVTPLILIF. The Cytoplasmic portion of the chain corresponds to 493–839; sequence CLRPRALEII…DELPPQVHKV (347 aa). Residues Ser-656, Ser-735, Ser-738, Ser-741, and Ser-828 each carry the phosphoserine modification. 2 disordered regions span residues 656 to 689 and 717 to 839; these read SPLQPGQAPQGRVPSTMTGSGVDARTASSGSSVW and HKQQ…VHKV. The segment covering 724–736 has biased composition (basic and acidic residues); it reads EPERHVWHRRESD. Acidic residues-rich tracts occupy residues 737 to 747 and 823 to 832; these read ESGESAPEEGG and VPEEGSEDEL.

Belongs to the ATG9 family. In terms of assembly, homotrimer; forms a homotrimer with a central pore that forms a path between the two membrane leaflets. Interacts (via cytoplasmic its C-terminus) with ATG2A. Interacts with SUPT20H. Interacts (via the tyrosine-based sorting signal motif) with AP4M1; promoting association with the AP-4 complex. Interacts with ARFIP1 and ARFIP2. Interacts with PI4K2A and PI4KB. Interacts with ATG4A; the interaction is direct and promotes ATG9A trafficking. Post-translationally, ufmylated in a DDRGK1 dependent manner.

The protein resides in the preautophagosomal structure membrane. It is found in the cytoplasmic vesicle. The protein localises to the autophagosome membrane. It localises to the golgi apparatus. Its subcellular location is the trans-Golgi network membrane. The protein resides in the late endosome membrane. It is found in the recycling endosome membrane. The protein localises to the endoplasmic reticulum membrane. It localises to the mitochondrion membrane. It carries out the reaction a 1,2-diacyl-sn-glycero-3-phosphocholine(in) = a 1,2-diacyl-sn-glycero-3-phosphocholine(out). The catalysed reaction is a 1,2-diacyl-sn-glycero-3-phospho-L-serine(in) = a 1,2-diacyl-sn-glycero-3-phospho-L-serine(out). The enzyme catalyses a 1,2-diacyl-sn-glycero-3-phosphoethanolamine(in) = a 1,2-diacyl-sn-glycero-3-phosphoethanolamine(out). Phospholipid scramblase involved in autophagy by mediating autophagosomal membrane expansion. Cycles between the preautophagosomal structure/phagophore assembly site (PAS) and the cytoplasmic vesicle pool and supplies membrane for the growing autophagosome. Lipid scramblase activity plays a key role in preautophagosomal structure/phagophore assembly by distributing the phospholipids that arrive through ATG2 (ATG2A or ATG2B) from the cytoplasmic to the luminal leaflet of the bilayer, thereby driving autophagosomal membrane expansion. Also required to supply phosphatidylinositol 4-phosphate to the autophagosome initiation site by recruiting the phosphatidylinositol 4-kinase beta (PI4KB) in a process dependent on ARFIP2, but not ARFIP1. In addition to autophagy, also plays a role in necrotic cell death. The sequence is that of Autophagy-related protein 9A from Rattus norvegicus (Rat).